The primary structure comprises 343 residues: Trans-enoyl reductase ACTTS2 (343 aa).

42 to 45 (GDWK) lines the NADP(+) pocket. 128–135 (VGITTVGQ) is a substrate binding site. NADP(+) contacts are provided by residues 162–165 (STAT), 185–188 (SPHN), and Y203. Position 268 to 272 (268 to 272 (GYTAL)) interacts with substrate. NADP(+) is bound at residue 333–334 (VS).

This sequence belongs to the zinc-containing alcohol dehydrogenase family. As to quaternary structure, monomer.

The protein operates within mycotoxin biosynthesis. Its function is as follows. Trans-enoyl reductase; part of the gene clusters that mediate the biosynthesis of the host-selective toxins (HSTs) ACT-toxins responsible for brown spot of tangerine disease by the tangerine pathotype which affects tangerines and mandarins. ACT-toxins consist of three moieties, 9,10-epoxy-8-hydroxy-9-methyl-decatrienoic acid (EDA), valine and a polyketide. ACT-toxin I is toxic to both citrus and pear; toxin II the 5''-deoxy derivative of ACT-toxin I, is highly toxic to pear and slightly toxic to citrus. On cellular level, ACT-toxins affect plasma membrane of susceptible cells and cause a sudden increase in loss of K(+) after a few minutes of toxin treatment. The acyl-CoA ligase ACTT1, the hydrolase ACTT2, the enoyl-CoA hydratases ACTT3 and ACTT6, and the acyl-CoA synthetase ACTT5 are all involved in the biosynthesis of the AK-, AF- and ACT-toxin common 9,10-epoxy-8-hydroxy-9-methyl-decatrienoic acid (EDA) structural moiety. The exact role of each enzyme, and of additional enzymes identified within the AF-toxin clusters have still to be determined. On the other hand, ACTTS1 to ACTTS4 are specific to the tangerine pathotype. The function of ACTTS3 is to elongate the polyketide chain portion of ACT-toxin that is unique to this toxin. The enoyl-reductase ACTTS2 might complement the missing enoyl-reductase (ER) domain in ACTTS3 in the synthesis of the polyketide portion of ACT-toxin. The roles of the nonribosomal peptide synthetases-related proteins ACTTS1 and ACTTS4 have also still not been elucidated. The polypeptide is Trans-enoyl reductase ACTTS2 (Alternaria alternata (Alternaria rot fungus)).